We begin with the raw amino-acid sequence, 469 residues long: Flap endonuclease 1-B (469 aa).

Residues 1–103 (MGIKGLTGLL…GVLSKRLERR (103 aa)) form an N-domain region. Asp-32 lines the Mg(2+) pocket. 2 residues coordinate DNA: Arg-45 and Arg-69. Residues Asp-85, Glu-157, Glu-159, Asp-183, and Asp-185 each contribute to the Mg(2+) site. The interval 121–257 (DVDRFSRRTV…KSALKLIREY (137 aa)) is I-domain. Residue Glu-157 participates in DNA binding. Gly-235 and Asp-237 together coordinate DNA. Asp-237 is a Mg(2+) binding site. Residues 274 to 354 (QKAAQAAVES…GGMQIPEEWP (81 aa)) form a disordered region. Composition is skewed to acidic residues over residues 282–295 (ESDE…EDEP) and 302–317 (EMPD…EEEA). Residues 326–342 (PKKKKASSKTKEKRKGK) show a composition bias toward basic residues. An interaction with PCNA region spans residues 412-420 (QQGRLDGFF). Residues 424-469 (PKEKAAAPAPVGKAKGKGKIDAKAKGTKRKVDEKAESSAGKKPRKK) form a disordered region. Basic and acidic residues predominate over residues 441–459 (GKIDAKAKGTKRKVDEKAE).

It belongs to the XPG/RAD2 endonuclease family. FEN1 subfamily. Interacts with PCNA. Three molecules of FEN1 bind to one PCNA trimer with each molecule binding to one PCNA monomer. PCNA stimulates the nuclease activity without altering cleavage specificity. It depends on Mg(2+) as a cofactor. Phosphorylated. Phosphorylation upon DNA damage induces relocalization to the nuclear plasma.

It localises to the nucleus. Its subcellular location is the nucleolus. It is found in the nucleoplasm. The protein resides in the mitochondrion. In terms of biological role, structure-specific nuclease with 5'-flap endonuclease and 5'-3' exonuclease activities involved in DNA replication and repair. During DNA replication, cleaves the 5'-overhanging flap structure that is generated by displacement synthesis when DNA polymerase encounters the 5'-end of a downstream Okazaki fragment. It enters the flap from the 5'-end and then tracks to cleave the flap base, leaving a nick for ligation. Also involved in the long patch base excision repair (LP-BER) pathway, by cleaving within the apurinic/apyrimidinic (AP) site-terminated flap. Acts as a genome stabilization factor that prevents flaps from equilibrating into structures that lead to duplications and deletions. Also possesses 5'-3' exonuclease activity on nicked or gapped double-stranded DNA, and exhibits RNase H activity. Also involved in replication and repair of rDNA and in repairing mitochondrial DNA. In Laccaria bicolor (strain S238N-H82 / ATCC MYA-4686) (Bicoloured deceiver), this protein is Flap endonuclease 1-B.